A 559-amino-acid chain; its full sequence is MDDLDALLADLESTTSHISKRPVFLTEETPYSYPTGNHTYQEIAVPPPVPPPPSSEALNGTVIDPLDQWQPSVSRYGHQQPQSQSPIYSSSAKSSSASVPRDGLSSPSPRASEEEHVYSFPNKQKSAEPSPTMTSTSLGSNLSELDRLLLELNAVQHNPPSGFSADEVSRSPSLPNVTGPHYVIPESSSSAGGKAAPPTKEKPKRNGGRGIEDVRPSVESLLDELESSVPSPVPAITVSQGEVSSPQRVNASQQQTRISASSATRELDELMASLSDFKFMAQGKAGGSSSPPSTTPKPGSQLDTMLGSLQSDLNKLGVATVAKGVCGACKKPIAGQVVTAMGKTWHPEHFVCTHCQEEIGSRNFFERDGQPYCEKDYHNLFSPRCYYCNGPILDKVVTALDRTWHPEHFFCAQCGVFFGPEGFHEKDGKAYCRKDYFDMFAPKCGGCARAILENYISALNTLWHPECFVCRECFTPFINGSFFEHDGQPYCEVHYHERRGSLCSGCQKPITGRCITAMGKKFHPEHFVCAFCLKQLNKGTFKEQNDKPYCQNCFLKLFC.

The short motif at 3 to 15 (DLDALLADLESTT) is the LD motif 1 element. Positions 17 to 139 (HISKRPVFLT…SPTMTSTSLG (123 aa)) are disordered. A Phosphotyrosine modification is found at Tyr31. Positions 45-54 (VPPPVPPPPS) are enriched in pro residues. Residues 79–98 (QQPQSQSPIYSSSAKSSSAS) are compositionally biased toward low complexity. Tyr118 bears the Phosphotyrosine; by FAK1 mark. The segment covering 121 to 137 (PNKQKSAEPSPTMTSTS) has biased composition (polar residues). Positions 144–156 (ELDRLLLELNAVQ) match the LD motif 2 motif. Disordered stretches follow at residues 158 to 213 (NPPS…GIED) and 225 to 262 (LESS…SASS). Positions 217-229 (SVESLLDELESSV) match the LD motif 3 motif. Residues 237-262 (TVSQGEVSSPQRVNASQQQTRISASS) show a composition bias toward polar residues. The segment at 263–282 (ATRELDELMASLSDFKFMAQ) is required for binding to PARVA and ILK. Short sequence motifs (LD motif) lie at residues 266 to 277 (ELDELMASLSDF) and 301 to 313 (QLDT…QSDL). Residues 281 to 301 (AQGKAGGSSSPPSTTPKPGSQ) are disordered. 4 consecutive LIM zinc-binding domains span residues 326-376 (CGAC…CEKD), 385-435 (CYYC…CRKD), 444-494 (CGGC…CEVH), and 503-553 (CSGC…CQNC).

Interacts (via LD motif 4) with PARVA/PARVIN and ILK. Post-translationally, phosphorylated on tyrosine residues during integrin-mediated cell adhesion, embryonic development, fibroblast transformation and following stimulation of cells by mitogens.

It localises to the cytoplasm. The protein localises to the cytoskeleton. It is found in the cell junction. The protein resides in the focal adhesion. Its subcellular location is the cell cortex. In terms of biological role, cytoskeletal protein involved in actin-membrane attachment at sites of cell adhesion to the extracellular matrix (focal adhesion). Binds in vitro to vinculin as well as to the SH3 domain of c-SRC and, when tyrosine phosphorylated, to the SH2 domain of v-CRK. The polypeptide is Paxillin (PXN) (Gallus gallus (Chicken)).